A 329-amino-acid polypeptide reads, in one-letter code: Beta-ketoacyl-[acyl-carrier-protein] synthase III (329 aa).

Residues cysteine 114 and histidine 255 contribute to the active site. Residues 256 to 260 (QANQR) form an ACP-binding region. The active site involves asparagine 285.

It belongs to the thiolase-like superfamily. FabH family. In terms of assembly, homodimer.

It localises to the cytoplasm. It carries out the reaction malonyl-[ACP] + acetyl-CoA + H(+) = 3-oxobutanoyl-[ACP] + CO2 + CoA. Its pathway is lipid metabolism; fatty acid biosynthesis. Functionally, catalyzes the condensation reaction of fatty acid synthesis by the addition to an acyl acceptor of two carbons from malonyl-ACP. Catalyzes the first condensation reaction which initiates fatty acid synthesis and may therefore play a role in governing the total rate of fatty acid production. Possesses both acetoacetyl-ACP synthase and acetyl transacylase activities. Its substrate specificity determines the biosynthesis of branched-chain and/or straight-chain of fatty acids. The protein is Beta-ketoacyl-[acyl-carrier-protein] synthase III of Trichodesmium erythraeum (strain IMS101).